Reading from the N-terminus, the 350-residue chain is S-adenosylmethionine:tRNA ribosyltransferase-isomerase (350 aa).

This sequence belongs to the QueA family. In terms of assembly, monomer.

Its subcellular location is the cytoplasm. The catalysed reaction is 7-aminomethyl-7-carbaguanosine(34) in tRNA + S-adenosyl-L-methionine = epoxyqueuosine(34) in tRNA + adenine + L-methionine + 2 H(+). The protein operates within tRNA modification; tRNA-queuosine biosynthesis. In terms of biological role, transfers and isomerizes the ribose moiety from AdoMet to the 7-aminomethyl group of 7-deazaguanine (preQ1-tRNA) to give epoxyqueuosine (oQ-tRNA). In Bacillus cereus (strain ZK / E33L), this protein is S-adenosylmethionine:tRNA ribosyltransferase-isomerase.